The sequence spans 461 residues: MIKVGILDSTLREGEQTPGVIFTVDQRVEIAKALSDLGVSMIEAGHPAVSPDIYEGIKRIVKLKKEGIITSEIVGHSRAVKRDIEIAAELEVDRIAIFYGVSDLHLKAKHKATREEALRTIAETISYAKNHGVKVRFTAEDGSRTDFDFLVTVSKTARDAGADRVSIADTVGILYPSKTKELFSALTREVPNLEFDIHAHNDLGLAVANALAAIEGGATIIHATVNGLGERVGIVPLQQIAAAIKYHFGIEVVKLDKLQYVSSLVEKYSGIPMPPNYPITGDYAFLHKAGVHVAGVLNDPRTYEFMPPETFGRTRDYTIDKYTGKHALRDKYEKLGVKISDAEMDQILAKIKSNTTIRFYRDVDLLELAEEVTGRVLKPRPPEQIEALISVKCDSNVYTTSVTRRLSVINGVKEVMEISGDYDILVKVQAKDSNELNQIIESIRATKGVRSTLTSLVLKKM.

Positions 4–259 (VGILDSTLRE…IEVVKLDKLQ (256 aa)) constitute a Pyruvate carboxyltransferase domain. Arginine 12 lines the 2-oxoglutarate pocket. Glutamate 13 is a binding site for Mg(2+). 2-oxoglutarate is bound by residues histidine 76, arginine 136, and threonine 170. Residues histidine 198 and histidine 200 each contribute to the Mg(2+) site. The Proton acceptor role is filled by histidine 292.

Belongs to the alpha-IPM synthase/homocitrate synthase family. Homocitrate synthase LYS20/LYS21 subfamily. The cofactor is Mg(2+). Mn(2+) is required as a cofactor.

The enzyme catalyses acetyl-CoA + 2-oxoglutarate + H2O = (2R)-homocitrate + CoA + H(+). It participates in amino-acid biosynthesis; L-lysine biosynthesis via AAA pathway; L-alpha-aminoadipate from 2-oxoglutarate: step 1/5. Its function is as follows. Catalyzes the aldol-type condensation of 2-oxoglutarate with acetyl-CoA to yield homocitrate. Carries out the first step of the alpha-aminoadipate (AAA) lysine biosynthesis pathway. The chain is Homocitrate synthase from Saccharolobus islandicus (strain Y.N.15.51 / Yellowstone #2) (Sulfolobus islandicus).